Here is a 263-residue protein sequence, read N- to C-terminus: Endonuclease 8 (263 aa).

The active-site Schiff-base intermediate with DNA is the Pro-2. The active-site Proton donor is the Glu-3. The active-site Proton donor; for beta-elimination activity is the Lys-53. DNA contacts are provided by Gln-70, Arg-125, and Asn-169. The FPG-type zinc-finger motif lies at 229–263 (KVFHRDGEPCERCGGIIEKTTLSSRPFYWCPGCQH). Arg-253 acts as the Proton donor; for delta-elimination activity in catalysis.

Belongs to the FPG family. Zn(2+) serves as cofactor.

It catalyses the reaction 2'-deoxyribonucleotide-(2'-deoxyribose 5'-phosphate)-2'-deoxyribonucleotide-DNA = a 3'-end 2'-deoxyribonucleotide-(2,3-dehydro-2,3-deoxyribose 5'-phosphate)-DNA + a 5'-end 5'-phospho-2'-deoxyribonucleoside-DNA + H(+). In terms of biological role, involved in base excision repair of DNA damaged by oxidation or by mutagenic agents. Acts as a DNA glycosylase that recognizes and removes damaged bases. Has a preference for oxidized pyrimidines, such as thymine glycol, 5,6-dihydrouracil and 5,6-dihydrothymine. Has AP (apurinic/apyrimidinic) lyase activity and introduces nicks in the DNA strand. Cleaves the DNA backbone by beta-delta elimination to generate a single-strand break at the site of the removed base with both 3'- and 5'-phosphates. The polypeptide is Endonuclease 8 (Escherichia coli O127:H6 (strain E2348/69 / EPEC)).